The primary structure comprises 132 residues: Sec-independent protein translocase protein TatB (132 aa).

Residues 2–22 form a helical membrane-spanning segment; it reads FDGIGFMELLLIGILGLVVLG. Residues 68–132 are disordered; sequence ENQGLKDLSP…VSANPDKSNR (65 aa). Positions 102-122 are enriched in low complexity; the sequence is TPSASSSAPSESTPSEAPTAE.

It belongs to the TatB family. As to quaternary structure, the Tat system comprises two distinct complexes: a TatABC complex, containing multiple copies of TatA, TatB and TatC subunits, and a separate TatA complex, containing only TatA subunits. Substrates initially bind to the TatABC complex, which probably triggers association of the separate TatA complex to form the active translocon.

Its subcellular location is the cell inner membrane. Functionally, part of the twin-arginine translocation (Tat) system that transports large folded proteins containing a characteristic twin-arginine motif in their signal peptide across membranes. Together with TatC, TatB is part of a receptor directly interacting with Tat signal peptides. TatB may form an oligomeric binding site that transiently accommodates folded Tat precursor proteins before their translocation. The polypeptide is Sec-independent protein translocase protein TatB (Shewanella woodyi (strain ATCC 51908 / MS32)).